The following is a 234-amino-acid chain: Large ribosomal subunit protein uL1 (234 aa).

The protein belongs to the universal ribosomal protein uL1 family. Part of the 50S ribosomal subunit.

Binds directly to 23S rRNA. The L1 stalk is quite mobile in the ribosome, and is involved in E site tRNA release. In terms of biological role, protein L1 is also a translational repressor protein, it controls the translation of the L11 operon by binding to its mRNA. The sequence is that of Large ribosomal subunit protein uL1 from Cronobacter sakazakii (strain ATCC BAA-894) (Enterobacter sakazakii).